The primary structure comprises 233 residues: 2,3,4,5-tetrahydropyridine-2,6-dicarboxylate N-acetyltransferase (233 aa).

The protein belongs to the transferase hexapeptide repeat family. DapH subfamily.

It carries out the reaction (S)-2,3,4,5-tetrahydrodipicolinate + acetyl-CoA + H2O = L-2-acetamido-6-oxoheptanedioate + CoA. Its pathway is amino-acid biosynthesis; L-lysine biosynthesis via DAP pathway; LL-2,6-diaminopimelate from (S)-tetrahydrodipicolinate (acetylase route): step 1/3. Catalyzes the transfer of an acetyl group from acetyl-CoA to tetrahydrodipicolinate. The protein is 2,3,4,5-tetrahydropyridine-2,6-dicarboxylate N-acetyltransferase of Thermotoga petrophila (strain ATCC BAA-488 / DSM 13995 / JCM 10881 / RKU-1).